A 507-amino-acid chain; its full sequence is CWF19-like protein DRN1 (507 aa).

Position 242 is a phosphoserine (Ser242).

The protein belongs to the CWF19 family. In terms of assembly, interacts with DBR1. Interacts with SYF1, a component of the NTC complex. Interacts with lariat-introns and lariat-intermediates.

It is found in the nucleus. The protein resides in the cytoplasm. Involved in branched RNA metabolism, modulating the turnover of lariat-intron pre-mRNAs by the lariat-debranching enzyme DBR1. Enhances the debranching activity of DBR1 in vitro. The protein is CWF19-like protein DRN1 (DRN1) of Saccharomyces cerevisiae (strain ATCC 204508 / S288c) (Baker's yeast).